The chain runs to 141 residues: Hemoglobin subunit alpha (141 aa).

Residues 1–141 (VLSDNDKTNV…VSTVLTSKYR (141 aa)) enclose the Globin domain. A Phosphoserine modification is found at serine 3. Position 7 is an N6-succinyllysine (lysine 7). At threonine 8 the chain carries Phosphothreonine. At lysine 11 the chain carries N6-succinyllysine. At lysine 16 the chain carries N6-acetyllysine; alternate. Residue lysine 16 is modified to N6-succinyllysine; alternate. Residue tyrosine 24 is modified to Phosphotyrosine. Position 35 is a phosphoserine (serine 35). Lysine 40 bears the N6-succinyllysine mark. Position 58 (histidine 58) interacts with O2. Histidine 87 contacts heme b. Position 102 is a phosphoserine (serine 102). Threonine 108 is modified (phosphothreonine). A Phosphoserine modification is found at serine 124. Residues threonine 134 and threonine 137 each carry the phosphothreonine modification. Serine 138 carries the post-translational modification Phosphoserine.

Belongs to the globin family. Heterotetramer of two alpha chains and two beta chains. As to expression, red blood cells.

Functionally, involved in oxygen transport from the lung to the various peripheral tissues. Its function is as follows. Hemopressin acts as an antagonist peptide of the cannabinoid receptor CNR1. Hemopressin-binding efficiently blocks cannabinoid receptor CNR1 and subsequent signaling. This chain is Hemoglobin subunit alpha (HBA), found in Loxodonta africana (African elephant).